Reading from the N-terminus, the 271-residue chain is Thiamine thiazole synthase (271 aa).

Residues S39, 58 to 59 (ER), G66, V130, and 158 to 160 (HVD) contribute to the NAD(+) site. Residues D160 and H175 each contribute to the Fe cation site. NAD(+) is bound at residue M225. R235 contributes to the glycine binding site.

It belongs to the THI4 family. As to quaternary structure, homooctamer; tetramer of dimers. Fe(2+) is required as a cofactor.

The enzyme catalyses hydrogen sulfide + glycine + NAD(+) = ADP-5-ethyl-4-methylthiazole-2-carboxylate + nicotinamide + 3 H2O + H(+). It participates in cofactor biosynthesis; thiamine diphosphate biosynthesis. Involved in the biosynthesis of the thiazole moiety of thiamine. Catalyzes the conversion of NAD and glycine to adenosine diphosphate 5-(2-hydroxyethyl)-4-methylthiazole-2-carboxylate (ADT), an adenylated thiazole intermediate, using free sulfide as a source of sulfur. This is Thiamine thiazole synthase from Metallosphaera sedula (strain ATCC 51363 / DSM 5348 / JCM 9185 / NBRC 15509 / TH2).